The sequence spans 123 residues: Small ribosomal subunit protein uS11 (123 aa).

Belongs to the universal ribosomal protein uS11 family. As to quaternary structure, part of the 30S ribosomal subunit. Interacts with proteins S7 and S18. Binds to IF-3.

Functionally, located on the platform of the 30S subunit, it bridges several disparate RNA helices of the 16S rRNA. Forms part of the Shine-Dalgarno cleft in the 70S ribosome. In Coxiella burnetii (strain RSA 331 / Henzerling II), this protein is Small ribosomal subunit protein uS11.